Here is a 364-residue protein sequence, read N- to C-terminus: Uroporphyrinogen decarboxylase (364 aa).

Residues 28–32 (RQAGR), D78, Y160, T215, and H333 each bind substrate.

This sequence belongs to the uroporphyrinogen decarboxylase family. In terms of assembly, homodimer.

The protein localises to the cytoplasm. It carries out the reaction uroporphyrinogen III + 4 H(+) = coproporphyrinogen III + 4 CO2. It functions in the pathway porphyrin-containing compound metabolism; protoporphyrin-IX biosynthesis; coproporphyrinogen-III from 5-aminolevulinate: step 4/4. Functionally, catalyzes the decarboxylation of four acetate groups of uroporphyrinogen-III to yield coproporphyrinogen-III. The chain is Uroporphyrinogen decarboxylase from Burkholderia pseudomallei (strain 668).